A 155-amino-acid polypeptide reads, in one-letter code: MLSPKRTKYRKQQRGRMKGKATRGNRINFGEYGLVALEPAWITARQIEASRRAMTRYVRRGGQIWIRIFPDKPVTQRAAETRMGSGKGNPEYWVCVVKPGRILFEMGGVAEPIAREAMRLAAQKLPIKVKFVTKADFEKPEPAQATASEVATSSV.

Positions 1–22 are disordered; the sequence is MLSPKRTKYRKQQRGRMKGKAT.

The protein belongs to the universal ribosomal protein uL16 family. In terms of assembly, part of the 50S ribosomal subunit.

In terms of biological role, binds 23S rRNA and is also seen to make contacts with the A and possibly P site tRNAs. In Synechococcus sp. (strain JA-2-3B'a(2-13)) (Cyanobacteria bacterium Yellowstone B-Prime), this protein is Large ribosomal subunit protein uL16.